Reading from the N-terminus, the 419-residue chain is Enolase (419 aa).

Glutamine 161 contacts (2R)-2-phosphoglycerate. Catalysis depends on glutamate 205, which acts as the Proton donor. 3 residues coordinate Mg(2+): aspartate 240, glutamate 283, and aspartate 309. Positions 334, 363, 364, and 385 each coordinate (2R)-2-phosphoglycerate. Residue lysine 334 is the Proton acceptor of the active site.

It belongs to the enolase family. The cofactor is Mg(2+).

It is found in the cytoplasm. It localises to the secreted. Its subcellular location is the cell surface. It catalyses the reaction (2R)-2-phosphoglycerate = phosphoenolpyruvate + H2O. Its pathway is carbohydrate degradation; glycolysis; pyruvate from D-glyceraldehyde 3-phosphate: step 4/5. Functionally, catalyzes the reversible conversion of 2-phosphoglycerate (2-PG) into phosphoenolpyruvate (PEP). It is essential for the degradation of carbohydrates via glycolysis. In Saccharolobus solfataricus (strain ATCC 35092 / DSM 1617 / JCM 11322 / P2) (Sulfolobus solfataricus), this protein is Enolase.